The sequence spans 175 residues: NADH-ubiquinone oxidoreductase chain 6 (175 aa).

The next 5 membrane-spanning stretches (helical) occupy residues 1 to 21 (MMTYIVFILSIVFVMSFVGFA), 25 to 45 (SPIYGGLVLIISGGIGCAIVL), 47 to 67 (FGGSFLGLMVFLIYLGGMLVV), 88 to 108 (AVLAAFITGLLSELLTACYIL), and 149 to 169 (YGTWLVVVTGWSLLIGVLVIM).

Belongs to the complex I subunit 6 family. In terms of assembly, core subunit of respiratory chain NADH dehydrogenase (Complex I) which is composed of 45 different subunits.

It is found in the mitochondrion inner membrane. It catalyses the reaction a ubiquinone + NADH + 5 H(+)(in) = a ubiquinol + NAD(+) + 4 H(+)(out). Its function is as follows. Core subunit of the mitochondrial membrane respiratory chain NADH dehydrogenase (Complex I) which catalyzes electron transfer from NADH through the respiratory chain, using ubiquinone as an electron acceptor. Essential for the catalytic activity and assembly of complex I. The sequence is that of NADH-ubiquinone oxidoreductase chain 6 (MT-ND6) from Canis lupus familiaris (Dog).